The sequence spans 491 residues: Probable cytosol aminopeptidase (491 aa).

Residues K264 and D269 each contribute to the Mn(2+) site. K276 is an active-site residue. Mn(2+) is bound by residues D287, D346, and E348. R350 is a catalytic residue.

Belongs to the peptidase M17 family. The cofactor is Mn(2+).

It localises to the cytoplasm. It catalyses the reaction Release of an N-terminal amino acid, Xaa-|-Yaa-, in which Xaa is preferably Leu, but may be other amino acids including Pro although not Arg or Lys, and Yaa may be Pro. Amino acid amides and methyl esters are also readily hydrolyzed, but rates on arylamides are exceedingly low.. It carries out the reaction Release of an N-terminal amino acid, preferentially leucine, but not glutamic or aspartic acids.. In terms of biological role, presumably involved in the processing and regular turnover of intracellular proteins. Catalyzes the removal of unsubstituted N-terminal amino acids from various peptides. The sequence is that of Probable cytosol aminopeptidase from Xylella fastidiosa (strain 9a5c).